The primary structure comprises 1620 residues: ALK tyrosine kinase receptor (1620 aa).

The N-terminal stretch at methionine 1 to alanine 18 is a signal peptide. The Extracellular segment spans residues valine 19–serine 1038. The segment at arginine 48 to aspartate 70 is heparin-binding region. N-linked (GlcNAc...) asparagine glycans are attached at residues asparagine 169, asparagine 244, asparagine 285, asparagine 324, asparagine 411, asparagine 424, asparagine 445, asparagine 563, asparagine 571, and asparagine 627. The region spanning leucine 264–glutamate 427 is the MAM 1 domain. In terms of domain architecture, LDL-receptor class A spans leucine 437–lysine 473. The MAM 2 domain occupies phenylalanine 478–leucine 636. A disordered region spans residues proline 650 to threonine 674. Basic and acidic residues predominate over residues asparagine 654–proline 666. Cysteine 688 and cysteine 701 form a disulfide bridge. N-linked (GlcNAc...) asparagine glycosylation occurs at asparagine 709. A disulfide bridge connects residues cysteine 783 and cysteine 794. Asparagine 808, asparagine 863, asparagine 864, and asparagine 886 each carry an N-linked (GlcNAc...) asparagine glycan. Cysteine 906 and cysteine 928 are joined by a disulfide. An N-linked (GlcNAc...) asparagine glycan is attached at asparagine 986. Cystine bridges form between cysteine 987–cysteine 995, cysteine 990–cysteine 1006, and cysteine 1008–cysteine 1021. The segment at cysteine 987–proline 1025 is EGF-like. The helical transmembrane segment at valine 1039–tyrosine 1059 threads the bilayer. Residues arginine 1060 to proline 1620 are Cytoplasmic-facing. Residues tyrosine 1078, tyrosine 1092, and tyrosine 1096 each carry the phosphotyrosine modification. Residues isoleucine 1116 to valine 1392 form the Protein kinase domain. Histidine 1124 provides a ligand contact to ATP. Tyrosine 1131 bears the Phosphotyrosine mark. ATP-binding positions include lysine 1150 and glutamate 1197–methionine 1199. The Proton acceptor role is filled by aspartate 1249. An ATP-binding site is contributed by aspartate 1270. The residue at position 1278 (tyrosine 1278) is a Phosphotyrosine. Positions glutamate 1408 to valine 1463 are disordered. Residues lysine 1410–glutamate 1419 show a composition bias toward basic and acidic residues. At tyrosine 1507 the chain carries Phosphotyrosine. The segment at lysine 1514 to threonine 1540 is disordered. The residue at position 1604 (tyrosine 1604) is a Phosphotyrosine.

It belongs to the protein kinase superfamily. Tyr protein kinase family. Insulin receptor subfamily. As to quaternary structure, homodimer; homodimerizes following heparin- and ligand-binding. Interacts with CBL, IRS1, PIK3R1 and PLCG1. Interacts with FRS2 and SHC1. Interacts with PTN and MDK. Post-translationally, phosphorylated at tyrosine residues by autocatalysis, which activates kinase activity. In cells not stimulated by a ligand, receptor protein tyrosine phosphatase beta and zeta complex (PTPRB/PTPRZ1) dephosphorylates ALK at the sites in ALK that are undergoing autophosphorylation through autoactivation. Phosphorylation at Tyr-1507 is critical for SHC1 association. In terms of processing, N-glycosylated. Expressed in brain and CNS. Also expressed in the small intestine and testis, but not in normal lymphoid cells.

The protein localises to the cell membrane. The enzyme catalyses L-tyrosyl-[protein] + ATP = O-phospho-L-tyrosyl-[protein] + ADP + H(+). Activated upon ALKAL2 ligand-binding. ALKAL2-driven activation is coupled with heparin-binding. Following ligand-binding, homodimerizes and autophosphorylates, activating its kinase activity. Inactivated through dephosphorylation by receptor protein tyrosine phosphatase beta and zeta complex (PTPRB/PTPRZ1) when there is no stimulation by a ligand. Staurosporine, crizotinib and CH5424802 act as inhibitors of ALK kinase activity. Neuronal receptor tyrosine kinase that is essentially and transiently expressed in specific regions of the central and peripheral nervous systems and plays an important role in the genesis and differentiation of the nervous system. Also acts as a key thinness protein involved in the resistance to weight gain: in hypothalamic neurons, controls energy expenditure acting as a negative regulator of white adipose tissue lipolysis and sympathetic tone to fine-tune energy homeostasis. Following activation by ALKAL2 ligand at the cell surface, transduces an extracellular signal into an intracellular response. In contrast, ALKAL1 is not a potent physiological ligand for ALK. Ligand-binding to the extracellular domain induces tyrosine kinase activation, leading to activation of the mitogen-activated protein kinase (MAPK) pathway. Phosphorylates almost exclusively at the first tyrosine of the Y-x-x-x-Y-Y motif. Induces tyrosine phosphorylation of CBL, FRS2, IRS1 and SHC1, as well as of the MAP kinases MAPK1/ERK2 and MAPK3/ERK1. ALK activation may also be regulated by pleiotrophin (PTN) and midkine (MDK). PTN-binding induces MAPK pathway activation, which is important for the anti-apoptotic signaling of PTN and regulation of cell proliferation. MDK-binding induces phosphorylation of the ALK target insulin receptor substrate (IRS1), activates mitogen-activated protein kinases (MAPKs) and PI3-kinase, resulting also in cell proliferation induction. Drives NF-kappa-B activation, probably through IRS1 and the activation of the AKT serine/threonine kinase. Recruitment of IRS1 to activated ALK and the activation of NF-kappa-B are essential for the autocrine growth and survival signaling of MDK. This Homo sapiens (Human) protein is ALK tyrosine kinase receptor.